The following is a 199-amino-acid chain: Fe/S biogenesis protein NfuA (199 aa).

Cys-151 and Cys-154 together coordinate [4Fe-4S] cluster.

It belongs to the NfuA family. Homodimer. [4Fe-4S] cluster serves as cofactor.

Involved in iron-sulfur cluster biogenesis. Binds a 4Fe-4S cluster, can transfer this cluster to apoproteins, and thereby intervenes in the maturation of Fe/S proteins. Could also act as a scaffold/chaperone for damaged Fe/S proteins. The sequence is that of Fe/S biogenesis protein NfuA from Xanthomonas euvesicatoria pv. vesicatoria (strain 85-10) (Xanthomonas campestris pv. vesicatoria).